Consider the following 218-residue polypeptide: Cell division protein SepF (218 aa).

The disordered stretch occupies residues 24–115 (EDVTASTDNV…IANRREQYQQ (92 aa)). Over residues 28 to 43 (ASTDNVIPRSQQSVRA) the composition is skewed to polar residues. Residues 47 to 63 (PKQEPRNNHVQQDHQAR) show a composition bias toward basic and acidic residues.

Belongs to the SepF family. In terms of assembly, homodimer. Interacts with FtsZ.

The protein localises to the cytoplasm. Cell division protein that is part of the divisome complex and is recruited early to the Z-ring. Probably stimulates Z-ring formation, perhaps through the cross-linking of FtsZ protofilaments. Its function overlaps with FtsA. In Streptococcus pyogenes serotype M4 (strain MGAS10750), this protein is Cell division protein SepF.